Reading from the N-terminus, the 323-residue chain is 8-oxo-dGDP phosphatase NUDT18 (323 aa).

The region spanning 37–167 (RLRKNVCYVV…DILHLVELAA (131 aa)) is the Nudix hydrolase domain. L58 contacts Mg(2+). The Nudix box motif lies at 76-97 (GRMEPGETIVEALQREVKEEAG).

This sequence belongs to the Nudix hydrolase family. It depends on Mn(2+) as a cofactor. Mg(2+) is required as a cofactor.

It carries out the reaction 8-oxo-dGDP + H2O = 8-oxo-dGMP + phosphate + H(+). It catalyses the reaction 8-oxo-dADP + H2O = 8-oxo-dAMP + phosphate + H(+). The enzyme catalyses 2-oxo-dADP + H2O = 2-oxo-dAMP + phosphate + H(+). The catalysed reaction is 8-oxo-GDP + H2O = 8-oxo-GMP + phosphate + H(+). Its function is as follows. Mediates the hydrolysis of oxidized nucleoside diphosphate derivatives. Hydrolyzes 8-oxo-7,8-dihydroguanine (8-oxo-Gua)-containing deoxyribo- and ribonucleoside diphosphates to the monophosphates. Hydrolyzes 8-oxo-dGDP and 8-oxo-GDP with the same efficiencies. Also hydrolyzes 8-OH-dADP and 2-OH-dADP. Exhibited no or minimal hydrolysis activity against 8-oxo-dGTP, 8-oxo-GTP, dGTP, GTP, dGDP and GDP. Probably removes oxidized guanine nucleotides from both the DNA and RNA precursor pools. This chain is 8-oxo-dGDP phosphatase NUDT18, found in Homo sapiens (Human).